The following is a 924-amino-acid chain: Autophagy-related protein 9B (924 aa).

Residues 1–144 (MVSRMGWGGR…QDSPGLRVGP (144 aa)) form a disordered region. At 1 to 207 (MVSRMGWGGR…KIYSYHQRNG (207 aa)) the chain is on the cytoplasmic side. Positions 17–27 (WGDLGPGSVPL) are enriched in low complexity. A compositionally biased stretch (pro residues) spans 28–40 (LPMPLPPPPPPSC). The segment covering 78–88 (LQGTGASQSCH) has biased composition (polar residues). Positions 98-113 (PTQAQPAMTPASASPS) are enriched in low complexity. The Tyrosine-based sorting signal signature appears at 151-154 (YERL). Residues 208 to 228 (FACILLEDVFQLGQFIFIVTF) form a helical membrane-spanning segment. The Lumenal portion of the chain corresponds to 229 to 276 (TTFLLRCVDYNVLFANQPSNHTRPGPFHSKVTLSDAILPSAQCAERIR). The helical transmembrane segment at 277 to 297 (SSPLLVLLLVLAAGFWLVQLL) threads the bilayer. The Cytoplasmic segment spans residues 298–438 (RSVCNLFSYW…GALAARWGRT (141 aa)). Residues 439-459 (VLLLAALNLALSPLVLAWQVL) lie within the membrane without spanning it. The Cytoplasmic portion of the chain corresponds to 460–526 (HVFYSHVELL…AAPPAPLRTL (67 aa)). The chain crosses the membrane as a helical span at residues 527–547 (LARQLVFFAGALFAALLVLTV). At 548–551 (YDED) the chain is on the lumenal side. Residues 552–572 (VLAVEHVLTAMTALGVTATVA) traverse the membrane as a helical segment. Over 573–624 (RSFIPEEQCQGRAPQLLLQTALAHMHYLPEEPGPGGRDRAYRQMAQLLQYRA) the chain is Cytoplasmic. An intramembrane segment occupies 625–645 (VSLLEELLSPLLTPLFLLFWF). The Cytoplasmic portion of the chain corresponds to 646-924 (RPRALEIIDF…KEPDRASCTD (279 aa)). Residues 847–924 (QQEPWGEAAA…KEPDRASCTD (78 aa)) form a disordered region. Residues 878–890 (SWSSDGSSPASSP) are compositionally biased toward low complexity. Basic and acidic residues predominate over residues 913-924 (TQKEPDRASCTD).

This sequence belongs to the ATG9 family. As to quaternary structure, homotrimer; forms a homotrimer with a central pore that forms a path between the two membrane leaflets. In terms of tissue distribution, highly expressed in placenta (trophoblast cells) and pituitary gland. Not expressed in vascular endothelial.

Its subcellular location is the preautophagosomal structure membrane. The catalysed reaction is a 1,2-diacyl-sn-glycero-3-phosphocholine(in) = a 1,2-diacyl-sn-glycero-3-phosphocholine(out). The enzyme catalyses a 1,2-diacyl-sn-glycero-3-phospho-L-serine(in) = a 1,2-diacyl-sn-glycero-3-phospho-L-serine(out). It catalyses the reaction a 1,2-diacyl-sn-glycero-3-phosphoethanolamine(in) = a 1,2-diacyl-sn-glycero-3-phosphoethanolamine(out). Functionally, phospholipid scramblase involved in autophagy by mediating autophagosomal membrane expansion. Cycles between the preautophagosomal structure/phagophore assembly site (PAS) and the cytoplasmic vesicle pool and supplies membrane for the growing autophagosome. Lipid scramblase activity plays a key role in preautophagosomal structure/phagophore assembly by distributing the phospholipids that arrive through ATG2 (ATG2A or ATG2B) from the cytoplasmic to the luminal leaflet of the bilayer, thereby driving autophagosomal membrane expansion. In addition to autophagy, also plays a role in necrotic cell death. In Homo sapiens (Human), this protein is Autophagy-related protein 9B (ATG9B).